Reading from the N-terminus, the 328-residue chain is Versiconal hemiacetal acetate esterase (328 aa).

Positions 82–84 (HGG) match the Involved in the stabilization of the negatively charged intermediate by the formation of the oxyanion hole motif. Active-site residues include Ser-156, Asp-260, and His-290.

Belongs to the 'GDXG' lipolytic enzyme family.

The catalysed reaction is (2S,3S)-versiconal hemiacetal acetate + H2O = (2S-3S)-versiconal hemiacetal + acetate + H(+). It catalyses the reaction (3S)-versiconol acetate + H2O = (S)-versiconol + acetate + H(+). It functions in the pathway mycotoxin biosynthesis. Functionally, versiconal hemiacetal acetate esterase; part of the fragmented gene cluster that mediates the biosynthesis of dothistromin (DOTH), a polyketide toxin very similar in structure to the aflatoxin precursor, versicolorin B. The first step of the pathway is the conversion of acetate to norsolorinic acid (NOR) and requires the fatty acid synthase subunits hexA and hexB, as well as the polyketide synthase pksA. PksA combines a hexanoyl starter unit and 7 malonyl-CoA extender units to synthesize the precursor NOR. The hexanoyl starter unit is provided to the acyl-carrier protein (ACP) domain by the fungal fatty acid synthase hexA/hexB. The second step is the conversion of NOR to averantin (AVN) and requires the norsolorinic acid ketoreductase nor1, which catalyzes the dehydration of norsolorinic acid to form (1'S)-averantin. The cytochrome P450 monooxygenase avnA then catalyzes the hydroxylation of AVN to 5'hydroxyaverantin (HAVN). The next step is performed by adhA that transforms HAVN to averufin (AVF). Averufin might then be converted to hydroxyversicolorone by cypX and avfA. Hydroxyversicolorone is further converted versiconal hemiacetal acetate (VHA) by moxY. VHA is then the substrate for the versiconal hemiacetal acetate esterase est1 to yield versiconal (VAL). Versicolorin B synthase vbsA then converts VAL to versicolorin B (VERB) by closing the bisfuran ring. Then, the activity of the versicolorin B desaturase verB leads to versicolorin A (VERA). DotB, a predicted chloroperoxidase, may perform epoxidation of the A-ring of VERA. Alternatively, a cytochrome P450, such as cypX or avnA could catalyze this step. It is also possible that another, uncharacterized, cytochrome P450 enzyme is responsible for this step. Opening of the epoxide could potentially be achieved by the epoxide hydrolase epoA. However, epoA seems not to be required for DOTH biosynthesis, but other epoxide hydrolases may have the ability to complement this hydrolysis. Alternatively, opening of the epoxide ring could be achieved non-enzymatically. The next step is the deoxygenation of ring A to yield the 5,8-dihydroxyanthraquinone which is most likely catalyzed by the NADPH dehydrogenase encoded by ver1. The last stages of DOTH biosynthesis are proposed to involve hydroxylation of the bisfuran. OrdB and norB might have oxidative roles here. An alternative possibility is that cytochrome P450 monoogenases such as avnA and cypX might perform these steps in addition to previously proposed steps. This Dothistroma septosporum (strain NZE10 / CBS 128990) (Red band needle blight fungus) protein is Versiconal hemiacetal acetate esterase.